Consider the following 105-residue polypeptide: Large ribosomal subunit protein uL24 (105 aa).

This sequence belongs to the universal ribosomal protein uL24 family. In terms of assembly, part of the 50S ribosomal subunit.

One of two assembly initiator proteins, it binds directly to the 5'-end of the 23S rRNA, where it nucleates assembly of the 50S subunit. In terms of biological role, one of the proteins that surrounds the polypeptide exit tunnel on the outside of the subunit. This Aeromonas salmonicida (strain A449) protein is Large ribosomal subunit protein uL24.